The chain runs to 153 residues: Prostaglandin E synthase (153 aa).

At Met-1 to Val-13 the chain is on the lumenal side. The chain crosses the membrane as a helical span at residues Leu-14 to Lys-42. Arg-39 is a glutathione binding site. Residues Lys-43–Arg-61 lie on the Cytoplasmic side of the membrane. Residues Asn-62–Ser-91 traverse the membrane as a helical segment. Arg-74–Glu-78 contacts glutathione. Residues Phe-92–Asn-96 are Lumenal-facing. A helical membrane pass occupies residues Pro-97–Gly-120. Residues His-114 and Tyr-118 each coordinate glutathione. The Cytoplasmic segment spans residues Lys-121–Ala-124. Residues Pro-125–Leu-153 form a helical membrane-spanning segment. Residue Arg-127–Tyr-131 coordinates glutathione.

Belongs to the MAPEG family. Homotrimer. Requires glutathione as cofactor.

Its subcellular location is the membrane. It is found in the cytoplasm. It localises to the perinuclear region. It catalyses the reaction prostaglandin H2 = prostaglandin E2. The enzyme catalyses 2-glyceryl-prostaglandin H2 = 2-glyceryl-prostaglandin E2. The catalysed reaction is prostaglandin G2 = (15S)-15-hydroperoxy-prostaglandin E2. It carries out the reaction 1-chloro-2,4-dinitrobenzene + glutathione = 2,4-dinitrophenyl-S-glutathione + chloride + H(+). It catalyses the reaction (5S)-hydroperoxy-(6E,8Z,11Z,14Z)-eicosatetraenoate + 2 glutathione = (5S)-hydroxy-(6E,8Z,11Z,14Z)-eicosatetraenoate + glutathione disulfide + H2O. The protein operates within lipid metabolism; prostaglandin biosynthesis. Its function is as follows. Terminal enzyme of the cyclooxygenase (COX)-2-mediated prostaglandin E2 (PGE2) biosynthetic pathway. Catalyzes the glutathione-dependent oxidoreduction of prostaglandin endoperoxide H2 (PGH2) to prostaglandin E2 (PGE2) in response to inflammatory stimuli. Plays a key role in inflammation response, fever and pain. Also catalyzes the oxidoreduction of endocannabinoids into prostaglandin glycerol esters and PGG2 into 15-hydroperoxy-PGE2. In addition, displays low glutathione transferase and glutathione-dependent peroxidase activities, toward 1-chloro-2,4-dinitrobenzene and 5-hydroperoxyicosatetraenoic acid (5-HPETE), respectively. This is Prostaglandin E synthase (PTGES) from Bos taurus (Bovine).